A 180-amino-acid chain; its full sequence is Cytochrome b6-f complex iron-sulfur subunit 2 (180 aa).

The chain crosses the membrane as a helical span at residues 21 to 43; that stretch reads LLTFGTITGVAAGALYPAVKYLI. The 97-residue stretch at 66–162 folds into the Rieske domain; it reads VTEFLASHNA…ATVTDDDKLV (97 aa). Positions 108, 110, 126, and 129 each coordinate [2Fe-2S] cluster. Residues Cys113 and Cys128 are joined by a disulfide bond.

It belongs to the Rieske iron-sulfur protein family. As to quaternary structure, the 4 large subunits of the cytochrome b6-f complex are cytochrome b6, subunit IV (17 kDa polypeptide, PetD), cytochrome f and the Rieske protein, while the 4 small subunits are PetG, PetL, PetM and PetN. The complex functions as a dimer. [2Fe-2S] cluster is required as a cofactor.

The protein resides in the cellular thylakoid membrane. The catalysed reaction is 2 oxidized [plastocyanin] + a plastoquinol + 2 H(+)(in) = 2 reduced [plastocyanin] + a plastoquinone + 4 H(+)(out). Component of the cytochrome b6-f complex, which mediates electron transfer between photosystem II (PSII) and photosystem I (PSI), cyclic electron flow around PSI, and state transitions. This chain is Cytochrome b6-f complex iron-sulfur subunit 2, found in Synechocystis sp. (strain ATCC 27184 / PCC 6803 / Kazusa).